Reading from the N-terminus, the 345-residue chain is Probable velvet family sexual development regulator LACBIDRAFT_317102 (345 aa).

Polar residues-rich tracts occupy residues 1–13 and 24–38; these read MFTTHPQGRSYRS and EIQNSYDQHANNPPR. Disordered stretches follow at residues 1-43, 138-189, and 310-345; these read MFTT…TRRR, ESWT…SPSS, and RKRRKKGEIGSPLDDPKSKRKRTSLGSEDDEASDED. Positions 62 to 306 constitute a Velvet domain; it reads GQTIRAELDE…ARWGVRLNIR (245 aa). Composition is skewed to low complexity over residues 141–158 and 167–184; these read TSRSPTQTSFSSSSPTLS and SSPQTSSPTAAQSQASTP. A compositionally biased stretch (acidic residues) spans 336 to 345; the sequence is SEDDEASDED.

It belongs to the velvet family.

The protein resides in the nucleus. In terms of biological role, velvet-domain-containing protein that probably acts as a positive regulator of sexual development. The polypeptide is Probable velvet family sexual development regulator LACBIDRAFT_317102 (Laccaria bicolor (strain S238N-H82 / ATCC MYA-4686) (Bicoloured deceiver)).